The chain runs to 1350 residues: MAAAVELTGDGGTTAETRWLSPPLTHDDNRGFLQMLREKKERLGVGAAKVEVRLEKLTVEADVRVGRRAVPTLLNCAINAAQELAACAHMCTTRKKPMKIINEATGTIRPSRMTLLLGAPGSGKTTLLKALAGKLDSSLKMKGKVTYNGEEVNSSTPQYLHAYVSQYDLHHAEMTVRETIDFSSKMLGTNNEFEMLGEAIRRKKGVINRVDQELDSFIKATTFGEGSNLTTNYIIKILGLSECADTLVGDEMRRGISGGQKKRATIGEMLVGLARCFFMDDISTGLDSSTTFEIMKFLQQMAHLMDLTMVISLLQPPPETLELFDDIILLCEGQIVYHGPRENATDFFETMGFKCPSRKNVADFLQEVTSKMDQKQYWIGNANKYQYHSIEKFAESFRTSYLPRLVENDHFESTNAGKSKEVKTSTSRMISSWNIFKACFSREVLLLKRNSPVHIFKTIQITVLALVISTLFLRTNMRHDTVLDANKYMGALFMAVVIVNFNGMTEIAMTIKRLPIFYKQREILALPGWALLSSVFLLSLPISFVETGLWTGLTYYVIGYAPSFVRFIQHFVVLFAMHQMSMSLYRFLAAIGRTQVMANMLGTAALIAIYILGGFVISKDNLQPWLRWGYWTSPFTYAQNAVALNEFLDDRWATEFHFANANTVGETILKVRGLLTEWHWYWICVSILFGFSLVFNILSIFALQYMRSPHKHQVNINATKVKVDYNSQIVGNGTASTDQVILPFQPLSLVFDHINYFVDMPKEMTKYGVTDKKLQLLQDVSGAFRPGVLTALMGITGAGKTTLLDVLAGRKTGGYIEGTVKIAGYPKKQETFSRISGYCEQSDIHSPNLTVYESLQFSAWLRLPSNVKSHQRNMFIDEVMDLVELTGLKNAMVGLAGATGLSAEQRKRLTIAVELVASPSIIFMDEPTTGLDARAAAIVMRTVRKTVDTGRTVVCTIHQPSIEIFESFDELLLMKRGGQLIYSGSLGPLSSNMIKYFEAIPGVPRIKEGQNPAAWMLDISSRTAEYEIGVDYAEIYQRSSLYWENRQLIDDLGKPEPNTEDLHFPPKYWQDFRAQCMACLWKQNCAYWKNSEHNVVRFINTFAVSIMFGIVFWKIGSTIKDEQDVFNILGVVYGSALFLGFMNCSILQPVVGMERVVLYREKAAGMYSTMAYAIAQVAVELPYMFVQVFIFSAIVYPMIGFQMTATKFFWFALYMVLSFLYYTLYGMMTVALTPNIEIAAGLSFLIFIFWNVFSGFIIGRQMIPVWWRWVYWANPAAWTVYGLMFSQLGDRTELIQVPGQPEQTVKEFLEGYLGLQDRYFNLVTSLHVAIIALFTFLFFLSIKHLKFQRR.

The tract at residues 1–23 (MAAAVELTGDGGTTAETRWLSPP) is disordered. The ABC transporter 1 domain occupies 85-357 (AACAHMCTTR…FETMGFKCPS (273 aa)). 118–125 (GAPGSGKT) contacts ATP. Residues 434 to 647 (NIFKACFSRE…AQNAVALNEF (214 aa)) enclose the ABC transmembrane type-2 1 domain. 6 helical membrane-spanning segments follow: residues 453 to 473 (VHIF…TLFL), 491 to 511 (ALFM…AMTI), 523 to 543 (ILAL…LPIS), 557 to 577 (VIGY…LFAM), 597 to 617 (MANM…GFVI), and 683 to 703 (ICVS…IFAL). An ABC transporter 2 domain is found at 749–1001 (LVFDHINYFV…NMIKYFEAIP (253 aa)). Residue 794 to 801 (GITGAGKT) coordinates ATP. The region spanning 1074 to 1288 (AQCMACLWKQ…TVYGLMFSQL (215 aa)) is the ABC transmembrane type-2 2 domain. 7 consecutive transmembrane segments (helical) span residues 1099–1119 (INTF…GSTI), 1126–1146 (FNIL…NCSI), 1181–1201 (LPYM…MIGF), 1208–1228 (FFWF…YGMM), 1238–1258 (IAAG…GFII), 1269–1289 (WVYW…SQLG), and 1322–1342 (LVTS…FLSI).

Belongs to the ABC transporter superfamily. ABCG family. PDR (TC 3.A.1.205) subfamily.

The protein localises to the membrane. Its function is as follows. May be a general defense protein. This chain is ABC transporter G family member 45, found in Oryza sativa subsp. japonica (Rice).